Reading from the N-terminus, the 605-residue chain is Hepatocyte nuclear factor 1-alpha-A (605 aa).

Positions 1-31 (MASQLSYLQRELLQALLESGVTKEALKKALA) are dimerization. An HNF-p1 domain is found at 1-32 (MASQLSYLQRELLQALLESGVTKEALKKALAD). A disordered region spans residues 57–81 (QLPNGLGESHISEDESSDDGEDFTP). In terms of domain architecture, POU-specific atypical spans 85 to 180 (KELERLSPEE…IARLFTFTEF (96 aa)). Interaction with DNA stretches follow at residues 128 to 130 (QRE), 141 to 147 (HLSQHLN), 153 to 156 (KTQK), 206 to 209 (RFKW), 266 to 268 (RVY), and 273 to 276 (NRRK). The Nuclear localization signal signature appears at 200–208 (KKMRRNRFK). The segment at residues 202–282 (MRRNRFKWGP…NRRKEEAFRH (81 aa)) is a DNA-binding region (homeobox; HNF1-type). Positions 321–335 (DRSAVMANSQSTPSP) are enriched in polar residues. Positions 321–343 (DRSAVMANSQSTPSPSALEPSHS) are disordered. A not present in other members of the HNF1 family region spans residues 448-453 (PSHQLH).

It belongs to the HNF1 homeobox family. In terms of assembly, binds DNA as dimer. Forms a homodimer or heterodimer with HNF1-alpha-B. Potentially also form a heterodimer with HNF1-beta. Protein expressed in liver, stomach, small intestine, colon and kidney. Not expressed in spleen, lung, blood, heart muscle, skeletal muscle, testis and brain.

The protein localises to the nucleus. Its function is as follows. Transcriptional activator that regulates the tissue specific expression of multiple genes, especially in pancreas and liver. Binds to the hepatocyte specific promoter element HP1. Binds to the inverted palindrome 5'-GTTAATNATTAAC-3'. In Xenopus laevis (African clawed frog), this protein is Hepatocyte nuclear factor 1-alpha-A (hnf1a-a).